Here is a 137-residue protein sequence, read N- to C-terminus: Small ribosomal subunit protein uS19 (137 aa).

Belongs to the universal ribosomal protein uS19 family.

Functionally, protein S19 forms a complex with S13 that binds strongly to the 16S ribosomal RNA. The sequence is that of Small ribosomal subunit protein uS19 from Methanoculleus marisnigri (strain ATCC 35101 / DSM 1498 / JR1).